We begin with the raw amino-acid sequence, 720 residues long: Ornithine decarboxylase (720 aa).

Lysine 354 carries the post-translational modification N6-(pyridoxal phosphate)lysine.

It belongs to the Orn/Lys/Arg decarboxylase class-I family. Pyridoxal 5'-phosphate is required as a cofactor.

It catalyses the reaction L-ornithine + H(+) = putrescine + CO2. In Haemophilus influenzae (strain ATCC 51907 / DSM 11121 / KW20 / Rd), this protein is Ornithine decarboxylase (speF).